The chain runs to 512 residues: Apolipoprotein N-acyltransferase (512 aa).

Helical transmembrane passes span 5–25, 56–76, 92–112, 118–138, 168–188, and 195–215; these read LDKY…FAAA, FAVS…FYWI, VPLT…CFWL, LPRG…TEFA, FGGI…LVLA, and SGKR…GYTA. The CN hydrolase domain occupies 233–477; that stretch reads LQGNIDQTLK…ETVLEGHIKG (245 aa). Glu-271 acts as the Proton acceptor in catalysis. Lys-337 is a catalytic residue. Catalysis depends on Cys-389, which acts as the Nucleophile. The chain crosses the membrane as a helical span at residues 487-507; sequence TGSSWWLMGILTLAALILFIF.

It belongs to the CN hydrolase family. Apolipoprotein N-acyltransferase subfamily.

The protein resides in the cell inner membrane. The catalysed reaction is N-terminal S-1,2-diacyl-sn-glyceryl-L-cysteinyl-[lipoprotein] + a glycerophospholipid = N-acyl-S-1,2-diacyl-sn-glyceryl-L-cysteinyl-[lipoprotein] + a 2-acyl-sn-glycero-3-phospholipid + H(+). It participates in protein modification; lipoprotein biosynthesis (N-acyl transfer). In terms of biological role, catalyzes the phospholipid dependent N-acylation of the N-terminal cysteine of apolipoprotein, the last step in lipoprotein maturation. The chain is Apolipoprotein N-acyltransferase from Neisseria meningitidis serogroup A / serotype 4A (strain DSM 15465 / Z2491).